A 144-amino-acid chain; its full sequence is Large ribosomal subunit protein uL15 (144 aa).

Residues 1-51 (MRLNTLSPAEGAKHSAKRLGRGIGSGLGKTGGRGHKGQKSRTGGKVRRGFE) form a disordered region. The span at 21 to 31 (RGIGSGLGKTG) shows a compositional bias: gly residues. Over residues 32–47 (GRGHKGQKSRTGGKVR) the composition is skewed to basic residues.

This sequence belongs to the universal ribosomal protein uL15 family. In terms of assembly, part of the 50S ribosomal subunit.

In terms of biological role, binds to the 23S rRNA. In Actinobacillus succinogenes (strain ATCC 55618 / DSM 22257 / CCUG 43843 / 130Z), this protein is Large ribosomal subunit protein uL15.